Here is an 86-residue protein sequence, read N- to C-terminus: Heat shock factor-binding protein (86 aa).

Residues 34-63 (MSDSIITKIDDMGGRINELEQSINDLRAEM) are a coiled coil. Residues 42 to 52 (IDDMGGRINEL) are required for interactions with heat shock factors (HSFs). The segment at 59 to 86 (LRAEMGVEGTPPPASKSGDEPKTPASSS) is disordered.

This sequence belongs to the HSBP1 family. In terms of assembly, homohexamer. Interacts with HSFA1A, HSFA1B and HSFA2. Mostly expressed in siliques and flowers, and, to a lower extent, in roots, stems and leaves.

The protein localises to the nucleus. It is found in the cytoplasm. It localises to the cytosol. Functionally, negative regulator of the heat shock (HS) response. Affects negatively HSFA1B DNA-binding capacity in vitro. Involved in acquired thermotolerance but not basal thermotolerance. Crucial for seed development, after fertilization and during embryogenesis. In Arabidopsis thaliana (Mouse-ear cress), this protein is Heat shock factor-binding protein.